Here is a 214-residue protein sequence, read N- to C-terminus: N-(5'-phosphoribosyl)anthranilate isomerase (214 aa).

This sequence belongs to the TrpF family.

The catalysed reaction is N-(5-phospho-beta-D-ribosyl)anthranilate = 1-(2-carboxyphenylamino)-1-deoxy-D-ribulose 5-phosphate. It participates in amino-acid biosynthesis; L-tryptophan biosynthesis; L-tryptophan from chorismate: step 3/5. The protein is N-(5'-phosphoribosyl)anthranilate isomerase of Rhodospirillum centenum (strain ATCC 51521 / SW).